A 595-amino-acid chain; its full sequence is L-allo-isoleucine:holo-[CmaA peptidyl-carrier protein] ligase (595 aa).

The Carrier domain maps to 507–582 (VVSPQAGSAV…EWVQYYATHA (76 aa)). The residue at position 542 (Ser-542) is an O-(pantetheine 4'-phosphoryl)serine.

It belongs to the ATP-dependent AMP-binding enzyme family. As to quaternary structure, homodimer. Pantetheine 4'-phosphate is required as a cofactor.

It carries out the reaction L-alloisoleucine + holo-[CmaA peptidyl-carrier protein] + ATP = L-alloisoleucyl-[CmaA peptidyl-carrier protein] + AMP + diphosphate. Its function is as follows. Involved in the biosynthesis of the phytotoxin coronatine (COR) which mimics the plant hormone jasmonic acid isoleucine and promotes opening of stomata for bacterial entry, bacterial growth in the apoplast, systemic susceptibility, and disease symptoms. CmaA catalyzes the adenylation of L-allo-isoleucine (via the A domain) and the attachment of L-allo-isoleucine to the 4'-phosphopantetheine arm located within the T domain of CmaA. It can also use L-isoleucine, L-leucine and L-valine as substrates. This chain is L-allo-isoleucine:holo-[CmaA peptidyl-carrier protein] ligase, found in Pseudomonas savastanoi pv. glycinea (Pseudomonas syringae pv. glycinea).